The primary structure comprises 634 residues: MYDLLKTIDDPADLRRLDRRQLQPLADELRAFVLDSVSKTGGHLSSNLGTVELTIALHYVFNTPDDRIVWDVGHQTYPHKILTGRRDGMKTLRQFDGISGFPRRSESEYDTFGTAHSSTSISAALGMAIGSKLNGDDRFSIAVIGDGAMTAGMAFEAMNNAGVSEDAKLLVILNDNDMSISPPVGALNRHLARLMSGRFYAAARAGVERVLSVAPPVLELARKLEEHAKGMVVPATLFEEFGFNYIGPIDGHDLDSLIPTLQNIKELRGPQFLHVVTKKGQGYKLAEADPVLYHGPGKFNPAEGIKPSTTPAKKTYTQVFGEWLCDAAELDARVVGITPAMREGSGMVEFEKRFPERYYDVGIAEQHAVTFAGGLATEGLKPVVAIYSTFLQRAYDQLIHDVALQNLPVVFAIDRAGLVGADGATHAGAYDLAFLRCIPNMTVMAASDENECRQMLHTALQQPNPTAVRYPRGAGTGVATVKAFTEIPLGKGEVRRRTSQPDGKRIAILAFGTMVAPSLAAADALDATVANMRFVKPIDAELVQALARTHDYLVTVEEGCVMGGAGSACVEAMMESGVVRPVLQLGLPDRFVDHGDPAKLLSLCGLDGDGIAKSIRERFLSHAADVASPAKRVA.

Thiamine diphosphate is bound by residues His74 and 115–117 (AHS). Asp146 lines the Mg(2+) pocket. Thiamine diphosphate is bound by residues 147 to 148 (GA), Asn176, Tyr283, and Glu365. Asn176 serves as a coordination point for Mg(2+).

Belongs to the transketolase family. DXPS subfamily. As to quaternary structure, homodimer. Mg(2+) serves as cofactor. Requires thiamine diphosphate as cofactor.

It carries out the reaction D-glyceraldehyde 3-phosphate + pyruvate + H(+) = 1-deoxy-D-xylulose 5-phosphate + CO2. Its pathway is metabolic intermediate biosynthesis; 1-deoxy-D-xylulose 5-phosphate biosynthesis; 1-deoxy-D-xylulose 5-phosphate from D-glyceraldehyde 3-phosphate and pyruvate: step 1/1. Its function is as follows. Catalyzes the acyloin condensation reaction between C atoms 2 and 3 of pyruvate and glyceraldehyde 3-phosphate to yield 1-deoxy-D-xylulose-5-phosphate (DXP). The chain is 1-deoxy-D-xylulose-5-phosphate synthase from Burkholderia pseudomallei (strain 668).